Consider the following 85-residue polypeptide: Small ribosomal subunit protein eS27 (85 aa).

The segment at 38 to 60 (CHGCRTITTVFSHAQNVVICSSC) adopts a C4-type zinc-finger fold.

The protein belongs to the eukaryotic ribosomal protein eS27 family. It depends on Zn(2+) as a cofactor.

This is Small ribosomal subunit protein eS27 (rps27) from Dictyostelium discoideum (Social amoeba).